The primary structure comprises 298 residues: N-acetylmuramic acid 6-phosphate etherase (298 aa).

The SIS domain maps to 54–217; sequence TIKAMKQGGR…STTVMIGLGK (164 aa). Glutamate 82 (proton donor) is an active-site residue. Glutamate 113 is an active-site residue.

Belongs to the GCKR-like family. MurNAc-6-P etherase subfamily. In terms of assembly, homodimer.

It catalyses the reaction N-acetyl-D-muramate 6-phosphate + H2O = N-acetyl-D-glucosamine 6-phosphate + (R)-lactate. Its pathway is amino-sugar metabolism; N-acetylmuramate degradation. Specifically catalyzes the cleavage of the D-lactyl ether substituent of MurNAc 6-phosphate, producing GlcNAc 6-phosphate and D-lactate. The protein is N-acetylmuramic acid 6-phosphate etherase of Halalkalibacterium halodurans (strain ATCC BAA-125 / DSM 18197 / FERM 7344 / JCM 9153 / C-125) (Bacillus halodurans).